The chain runs to 508 residues: Maturase K (508 aa).

This sequence belongs to the intron maturase 2 family. MatK subfamily.

Its subcellular location is the plastid. It localises to the chloroplast. Functionally, usually encoded in the trnK tRNA gene intron. Probably assists in splicing its own and other chloroplast group II introns. The sequence is that of Maturase K from Amburana cearensis (Cerejeira).